We begin with the raw amino-acid sequence, 267 residues long: Low affinity immunoglobulin gamma Fc region receptor III (267 aa).

The first 36 residues, 1 to 36 (MTLETQMFQNAHSGSQWLLPPLTMLLLFAFADRQTA), serve as a signal peptide directing secretion. At 37–221 (NLPKAVVKRD…STSSLVWFHA (185 aa)) the chain is on the extracellular side. 2 consecutive Ig-like C2-type domains span residues 39 to 121 (PKAV…EVIS) and 122 to 204 (DWLL…VTIT). Disulfide bonds link Cys62/Cys104 and Cys143/Cys187. Asn70, Asn78, Asn97, Asn171, and Asn178 each carry an N-linked (GlcNAc...) asparagine glycan. The helical transmembrane segment at 222-241 (AFCLVMCLLFAVDTGLYFCV) threads the bilayer. Residues 242–267 (RRNLQTSGEDWRKSLSVGKYKAPQDK) lie on the Cytoplasmic side of the membrane.

As to quaternary structure, may form multisubunit complex with other heteroproteins. This association is required for efficient cell-surface expression. Does not associate with CD3 zeta. In terms of tissue distribution, expressed on natural killer cells and macrophages.

The protein localises to the cell membrane. Receptor for the Fc region of complexed immunoglobulins gamma. Low affinity receptor which binds to IgG1, IgG2a and IgG2b. Mediates neutrophil activation by IgG complexes redundantly with Fcgr4. This Rattus norvegicus (Rat) protein is Low affinity immunoglobulin gamma Fc region receptor III (Fcgr3).